A 404-amino-acid chain; its full sequence is CD209 antigen (404 aa).

The Cytoplasmic portion of the chain corresponds to 1-37 (MSDSKEPRLQQLDLLEEEQLGGVGFRQTRGYKSLAGC). 3 consecutive short sequence motifs (endocytosis signal) follow at residues 14–15 (LL), 16–18 (EEE), and 31–34 (YKSL). Residues 38–58 (LGHGPLVLQLLSFTLLAGLLV) traverse the membrane as a helical; Signal-anchor for type II membrane protein segment. The Extracellular segment spans residues 59 to 404 (QVSKVPSSLS…APTTPNPPPA (346 aa)). Asn80 carries N-linked (GlcNAc...) asparagine glycosylation. Repeat copies occupy residues 96–118 (KQQEIYQELTRLKAAVGELPEKS), 119–141 (KQQEIYEELTRLKAAVGELPEKS), 142–164 (KLQEIYQELTRLKAAVGELPEKS), 165–187 (KMQEIYQELSRLKAAVGDLPEKS), 188–210 (KQQEIYQELSRLKAAVGDLPEKS), 211–233 (KQQEIYQKLTQLKAAVDGLPDRS), and 234–257 (KQQEIYQELIQLKAAVERLCHPCP). The segment at 96 to 257 (KQQEIYQELT…AVERLCHPCP (162 aa)) is 7 X approximate tandem repeats. Intrachain disulfides connect Cys256–Cys267, Cys284–Cys377, and Cys356–Cys369. One can recognise a C-type lectin domain in the interval 263-378 (FQGNCYFMSN…CNLAKFWICK (116 aa)). Glu347, Asn349, Ile351, Glu354, Asn365, and Asp366 together coordinate Ca(2+). Residues 382–404 (ASCSGDEERLLSPAPTTPNPPPA) are disordered.

As to quaternary structure, homotetramer. Interacts with C1QBP; the interaction is indicative for a C1q:C1QBP:CD209 signaling complex. Interacts with ICAM2 and ICAM3 by binding to mannose-like carbohydrates. Interacts (via C-type lectin domain) with CEACAM1 (via Lewis X moieties); this interaction is regulated by the glycosylation pattern of CEACAM1 on cell types and regulates contact between dendritic cells and neutrophils.

The protein resides in the membrane. Functionally, pathogen-recognition receptor expressed on the surface of immature dendritic cells (DCs) and involved in initiation of primary immune response. Thought to mediate the endocytosis of pathogens which are subsequently degraded in lysosomal compartments. The receptor returns to the cell membrane surface and the pathogen-derived antigens are presented to resting T-cells via MHC class II proteins to initiate the adaptive immune response. Probably recognizes in a calcium-dependent manner high mannose N-linked oligosaccharides in a variety of pathogen antigens. In terms of biological role, on DCs it is a high affinity receptor for ICAM2 and ICAM3 by binding to mannose-like carbohydrates. May act as a DC rolling receptor that mediates transendothelial migration of DC presursors from blood to tissues by binding endothelial ICAM2. Seems to regulate DC-induced T-cell proliferation by binding to ICAM3 on T-cells in the immunological synapse formed between DC and T-cells. The chain is CD209 antigen (CD209) from Macaca mulatta (Rhesus macaque).